The chain runs to 105 residues: MNIHISALIQKMEEELKKAKTAERDEELKRYVAVVRSLCDVVLDQPENASAPRIQPSVTPSPAAPPSTDQLMMEKMMGSAGLNKYRKQEKEKQEEDGNGESLFDF.

The disordered stretch occupies residues 47–105 (ENASAPRIQPSVTPSPAAPPSTDQLMMEKMMGSAGLNKYRKQEKEKQEEDGNGESLFDF). Residues 86–95 (RKQEKEKQEE) are compositionally biased toward basic and acidic residues.

This is an uncharacterized protein from Bacillus subtilis (strain 168).